The sequence spans 280 residues: Mitochondrial outer membrane protein porin 2 (280 aa).

Belongs to the eukaryotic mitochondrial porin (TC 1.B.8.1) family. As to expression, expressed in roots, stems, leaves, palea, lemma and pollen.

The protein localises to the mitochondrion outer membrane. In terms of biological role, forms a channel through the mitochondrial outer membrane that allows diffusion of small hydrophilic molecules. The channel adopts an open conformation at low or zero membrane potential and a closed conformation at potentials above 30-40 mV. The open state has a weak anion selectivity whereas the closed state is cation-selective. This chain is Mitochondrial outer membrane protein porin 2 (VDAC2), found in Oryza sativa subsp. japonica (Rice).